The primary structure comprises 168 residues: 2-C-methyl-D-erythritol 2,4-cyclodiphosphate synthase (168 aa).

Residues Asp13 and His15 each contribute to the a divalent metal cation site. 4-CDP-2-C-methyl-D-erythritol 2-phosphate contacts are provided by residues 13 to 15 and 39 to 40; these read DVH and HS. His47 is a binding site for a divalent metal cation. 4-CDP-2-C-methyl-D-erythritol 2-phosphate is bound by residues 61 to 63, 66 to 70, Phe144, and Lys147; these read DIG and FPDTD.

It belongs to the IspF family. As to quaternary structure, homotrimer. A divalent metal cation is required as a cofactor.

The catalysed reaction is 4-CDP-2-C-methyl-D-erythritol 2-phosphate = 2-C-methyl-D-erythritol 2,4-cyclic diphosphate + CMP. It functions in the pathway isoprenoid biosynthesis; isopentenyl diphosphate biosynthesis via DXP pathway; isopentenyl diphosphate from 1-deoxy-D-xylulose 5-phosphate: step 4/6. Functionally, involved in the biosynthesis of isopentenyl diphosphate (IPP) and dimethylallyl diphosphate (DMAPP), two major building blocks of isoprenoid compounds. Catalyzes the conversion of 4-diphosphocytidyl-2-C-methyl-D-erythritol 2-phosphate (CDP-ME2P) to 2-C-methyl-D-erythritol 2,4-cyclodiphosphate (ME-CPP) with a corresponding release of cytidine 5-monophosphate (CMP). This Ralstonia pickettii (strain 12J) protein is 2-C-methyl-D-erythritol 2,4-cyclodiphosphate synthase.